The following is a 273-amino-acid chain: Large ribosomal subunit protein uL2 (273 aa).

Residues 228 to 273 (VDHPHGGGEGKTSGGRHPVTPWGFPTKGKKTRKNKRTSKFIVKKRK) form a disordered region. Basic residues predominate over residues 254-273 (KGKKTRKNKRTSKFIVKKRK).

This sequence belongs to the universal ribosomal protein uL2 family. Part of the 50S ribosomal subunit. Forms a bridge to the 30S subunit in the 70S ribosome.

One of the primary rRNA binding proteins. Required for association of the 30S and 50S subunits to form the 70S ribosome, for tRNA binding and peptide bond formation. It has been suggested to have peptidyltransferase activity; this is somewhat controversial. Makes several contacts with the 16S rRNA in the 70S ribosome. In Rickettsia peacockii (strain Rustic), this protein is Large ribosomal subunit protein uL2.